The primary structure comprises 130 residues: MDEKEFKRLLRVRARLKRKKPRFLRQEWWRYPKFKNDPKWRRPKGIDSKMRLKLKGKPRSPSIGWSSPRLVRGLHPSGYEEVLIHNVKELEKLDPKRQAARIAHTVGKKKRIEILKRAQELGIKVLNPQL.

It belongs to the eukaryotic ribosomal protein eL32 family.

In Pyrococcus abyssi (strain GE5 / Orsay), this protein is Large ribosomal subunit protein eL32 (rpl32e).